The sequence spans 411 residues: MAEKTEKPTAKKLRDAAKKGQTFKARDIVALIVIATGALAAPALVDLTRIAAEFVRIASTGAQPNPGAYAFAWAKLFLRIAAPFVLLCAAAGALPSLVQSRFTLAVESIRFDLTALDPVKGMKRLFSWRSAKDAVKALLYVGVFALTVRVFADLYHADVFGLFRARPALLGHMWIVLTVRLVLLFLLCALPVLILDAAVEYFLYHRELKMDKHEVKQEYKESEGNHEIKSKRREIHQELLSEEIKANVEQSDFIVANPTHIAIGVYVNPDIVPIPFVSVRETNARALAVIRHAEACGVPVVRNVALARSIYRNSPRRYSFVSHDDIDGVMRVLIWLGEVEAANRGGPPPETRAPTSAEPQARDGVAPPGDACADNAFPDDAPPGAAAPNAGSPDSPAPDGGAPARTGDQNA.

Transmembrane regions (helical) follow at residues 28–48 (IVAL…VDLT), 80–100 (IAAP…LVQS), 137–157 (ALLY…LYHA), and 175–195 (IVLT…VLIL). The disordered stretch occupies residues 341–411 (AANRGGPPPE…APARTGDQNA (71 aa)). Residues 370-404 (DACADNAFPDDAPPGAAAPNAGSPDSPAPDGGAPA) show a composition bias toward low complexity.

This sequence belongs to the type III secretion exporter family.

The protein localises to the cell membrane. In terms of biological role, part of the bsa type III secretion system, is involved in the intracellular replication of invading bacteria inside the host cell. Probably necessary for the lysis of the vacuole membrane and escape into the host cell cytoplasm. The chain is Secretion apparatus protein BsaZ (bsaZ) from Burkholderia pseudomallei (strain 1106a).